Reading from the N-terminus, the 233-residue chain is Small heat shock protein hspF (233 aa).

The region spanning 129–233 (IPLFTFFEPL…ILLITVNKFL (105 aa)) is the sHSP domain.

This sequence belongs to the small heat shock protein (HSP20) family.

This is Small heat shock protein hspF (hspF-1) from Dictyostelium discoideum (Social amoeba).